The sequence spans 511 residues: Cytochrome P450 monooxygenase nodR (511 aa).

The helical transmembrane segment at 8–28 threads the bilayer; it reads ILFPISWEQSPIFLAVGLIFA. 2 N-linked (GlcNAc...) asparagine glycosylation sites follow: N76 and N373. Position 452 (C452) interacts with heme.

Belongs to the cytochrome P450 family. Requires heme as cofactor.

Its subcellular location is the membrane. It functions in the pathway secondary metabolite biosynthesis. Functionally, cytochrome P450 monooxygenase; part of the gene cluster that mediates the biosynthesis of the indole diterpenes nodulisporic acids (NA). Nodulisporic acid A (NAA) and its chemically modified derivatives are of particular significance because of their highly potent insecticidal activity against blood-feeding arthropods and lack of observable adverse effects on mammals, in particular the tremogenicity associated with the paspaline-derived IDTs is not observed. The geranylgeranyl diphosphate (GGPP) synthase ggs1, localized outside of the cluster, is proposed to catalyze the first step in nodulisporic acid biosynthesis via conversion of farnesyl pyrophosphate and isopentyl pyrophosphate into geranylgeranyl pyrophosphate (GGPP). Condensation of indole-3-glycerol phosphate with GGPP by the prenyl transferase nodC then forms 3-geranylgeranylindole (3-GGI). Epoxidation by the FAD-dependent monooxygenase nodM leads to a single-epoxidized-GGI that is substrate of the terpene cyclase nodB for cyclization to yield emindole SB. The terminal methyl carbon, C28, of emindole SB is then oxidized by the cytochrome P450 monooxygenase nodW to produce nodulisporic acid F (NAF), the pentacyclic core of NAA. NAF is converted to nodulisporic acid E (NAE) via prenylation. This step is probably performed by one of the indole diterpene prenyltransferases nodD1 or nodD2. Several oxidation steps performed by the FAD-linked oxidoreductase nodO and one of the cytochrome P450 monooxygenase nodR, nodX or nodZ further convert NAE to nodulisporic acid D (NAD). NAD is substrate of cytochrome P450 monooxygenase nodJ to produce the precursor of nodulisporic acid C (NAC), converted to NAC by one of the indole diterpene prenyltransferases nodD1 or nodD2. The FAD-dependent monooxygenase nodY2 then oxidizes NAC to nodulisporic acid B (NAB). Finally NAB is converted to NAA by one of the cytochrome P450 monooxygenases nodR, nodX or nodZ. The sequence is that of Cytochrome P450 monooxygenase nodR from Hypoxylon pulicicidum.